We begin with the raw amino-acid sequence, 212 residues long: MFDSKQLSVYFICGTQDIPKNKSIEQVLKEALEAGITLYQFREKGPNALKGEKKKQLALKLKQLCHSYHVPMIVNDDVQLAQEINADGIHVGQDDMEIQQFASQFKNKIIGLSVGNLKEYQQSDLSKVDYIGVGPMYTTSSKDDASKPVGPSMISQLRLYIHDFPIVAIGGINETNVQPIVDEGADGISVISAITRSTNIDKTVKYFLRYFT.

Residues 40–44 and Asn75 each bind 4-amino-2-methyl-5-(diphosphooxymethyl)pyrimidine; that span reads QFREK. Residues Asp76 and Asp95 each contribute to the Mg(2+) site. 4-amino-2-methyl-5-(diphosphooxymethyl)pyrimidine is bound at residue Ser113. Residue 139–141 coordinates 2-[(2R,5Z)-2-carboxy-4-methylthiazol-5(2H)-ylidene]ethyl phosphate; that stretch reads TSS. Residue Lys142 participates in 4-amino-2-methyl-5-(diphosphooxymethyl)pyrimidine binding. 2-[(2R,5Z)-2-carboxy-4-methylthiazol-5(2H)-ylidene]ethyl phosphate-binding positions include Gly171 and 191-192; that span reads IS.

It belongs to the thiamine-phosphate synthase family. Mg(2+) is required as a cofactor.

It catalyses the reaction 2-[(2R,5Z)-2-carboxy-4-methylthiazol-5(2H)-ylidene]ethyl phosphate + 4-amino-2-methyl-5-(diphosphooxymethyl)pyrimidine + 2 H(+) = thiamine phosphate + CO2 + diphosphate. The catalysed reaction is 2-(2-carboxy-4-methylthiazol-5-yl)ethyl phosphate + 4-amino-2-methyl-5-(diphosphooxymethyl)pyrimidine + 2 H(+) = thiamine phosphate + CO2 + diphosphate. It carries out the reaction 4-methyl-5-(2-phosphooxyethyl)-thiazole + 4-amino-2-methyl-5-(diphosphooxymethyl)pyrimidine + H(+) = thiamine phosphate + diphosphate. Its pathway is cofactor biosynthesis; thiamine diphosphate biosynthesis; thiamine phosphate from 4-amino-2-methyl-5-diphosphomethylpyrimidine and 4-methyl-5-(2-phosphoethyl)-thiazole: step 1/1. Functionally, condenses 4-methyl-5-(beta-hydroxyethyl)thiazole monophosphate (THZ-P) and 2-methyl-4-amino-5-hydroxymethyl pyrimidine pyrophosphate (HMP-PP) to form thiamine monophosphate (TMP). The sequence is that of Thiamine-phosphate synthase from Staphylococcus epidermidis (strain ATCC 35984 / DSM 28319 / BCRC 17069 / CCUG 31568 / BM 3577 / RP62A).